Here is a 418-residue protein sequence, read N- to C-terminus: MPQTIAEKIISNHSGRRVKAGEFVIADVDLTAVQDGTGPLTVEELKKAGFTKLANPARTILFIDHAAPSPRKELSNSQVVLRNFAKETGAILSEIGEGVCHQLLAEKYVNPGEILIGADSHTCTGGALGAFATGMGSTDVAVGMALGKTWLKAPQTFKIEVEGAFKKGVGAKDLILHLIGVIGADGATYKALEFHGSTIRNMEMADRFTLANMAVEAGAKAGLFFTDEKTRAYLAERGRGDNFKLISADEGADYEKVIKIDASSLEPTVSCPHTVDNTKTVGELKDIKVNQVFIGTCTNGRIEDLRIAAEILKDKKVNPGTRTFITPASRDVMLAALKEGLIEIFVKAGASVQTPGCGPCVGVHGGILGDGEVCLATQNRNFQGRMGNTKGFIYLSSPAVAAYSALKGYISDPREILK.

Residues Cys-297, Cys-357, and Cys-360 each contribute to the [4Fe-4S] cluster site.

The protein belongs to the aconitase/IPM isomerase family. LeuC type 2 subfamily. In terms of assembly, heterodimer of LeuC and LeuD. The cofactor is [4Fe-4S] cluster.

The catalysed reaction is (2R,3S)-3-isopropylmalate = (2S)-2-isopropylmalate. It participates in amino-acid biosynthesis; L-leucine biosynthesis; L-leucine from 3-methyl-2-oxobutanoate: step 2/4. In terms of biological role, catalyzes the isomerization between 2-isopropylmalate and 3-isopropylmalate, via the formation of 2-isopropylmaleate. This is 3-isopropylmalate dehydratase large subunit from Elusimicrobium minutum (strain Pei191).